The sequence spans 646 residues: DNA mismatch repair protein MutL (646 aa).

Disordered stretches follow at residues 356 to 380 and 415 to 452; these read FENRTASNPPAEKPDEETDRVNENS and TKNSEGLFDSEATSNEAASAEIESSEDDVRETEHAKPH. Low complexity predominate over residues 424-436; sequence SEATSNEAASAEI.

The protein belongs to the DNA mismatch repair MutL/HexB family.

Its function is as follows. This protein is involved in the repair of mismatches in DNA. It is required for dam-dependent methyl-directed DNA mismatch repair. May act as a 'molecular matchmaker', a protein that promotes the formation of a stable complex between two or more DNA-binding proteins in an ATP-dependent manner without itself being part of a final effector complex. This Staphylococcus carnosus (strain TM300) protein is DNA mismatch repair protein MutL.